The sequence spans 353 residues: Ornithine racemase (353 aa).

Residue lysine 35 is the Proton acceptor of the active site. Lysine 35 is subject to N6-(pyridoxal phosphate)lysine. Arginine 128 is a substrate binding site.

Belongs to the alanine racemase family. As to quaternary structure, homodimer. Pyridoxal 5'-phosphate is required as a cofactor.

It carries out the reaction L-ornithine = D-ornithine. Its function is as follows. Involved in the ornithine fermentation pathway. Catalyzes the conversion of L-ornithine to D-ornithine. OR could also racemize basic amino acids such as lysine and arginine. Serine, asparagine and alanine could be also converted by OR, but at a lower rate. The sequence is that of Ornithine racemase from Acetoanaerobium sticklandii (strain ATCC 12662 / DSM 519 / JCM 1433 / CCUG 9281 / NCIMB 10654 / HF) (Clostridium sticklandii).